A 47-amino-acid polypeptide reads, in one-letter code: Defensin-like protein 1 (47 aa).

4 cysteine pairs are disulfide-bonded: Cys5/Cys47, Cys16/Cys36, Cys22/Cys43, and Cys26/Cys45.

Belongs to the DEFL family.

Functionally, fabatins have antibacterial activity against Gram-positive and Gram-negative bacteria. High activity against P.aeruginosa. No activity against S.cerevisiae and C.albicans. This Vicia faba (Broad bean) protein is Defensin-like protein 1.